Consider the following 621-residue polypeptide: Glutathione-regulated potassium-efflux system protein KefC (621 aa).

Helical transmembrane passes span 4 to 24, 26 to 46, 54 to 74, 90 to 110, 114 to 134, 149 to 169, 178 to 198, 218 to 238, 270 to 290, 294 to 314, 326 to 346, and 359 to 379; these read HTLI…PIAV, LGLG…PWGL, AILH…GLEL, GALQ…LLGL, VAEL…MQAM, FAVL…IPLL, LVAF…VVAL, VFSA…EEVG, GLLL…GTLV, LRIV…LWLI, RWFA…FGAA, and ALTL…VLLT. An RCK N-terminal domain is found at 399 to 518; the sequence is QPRVIVAGFG…AGVEAPERET (120 aa). Residues 598–621 are disordered; sequence GWQGTEEGRHTGDIADEPENKPSA.

Belongs to the monovalent cation:proton antiporter 2 (CPA2) transporter (TC 2.A.37) family. KefC subfamily. Homodimer. Interacts with the regulatory subunit KefF.

It localises to the cell inner membrane. In terms of biological role, pore-forming subunit of a potassium efflux system that confers protection against electrophiles. Catalyzes K(+)/H(+) antiport. This is Glutathione-regulated potassium-efflux system protein KefC from Klebsiella pneumoniae (strain 342).